Reading from the N-terminus, the 37-residue chain is M-oxotoxin-Ot2d (37 aa).

As to expression, expressed by the venom gland.

It is found in the secreted. In terms of biological role, disrupts biological membranes, particularly those rich in phosphocholine. Has antimicrobial activity against Gram-negative bacterium E.coli, Gram-positive bacteria B.subtilis and S.aureus, and hemolytic activity against sheep, pig and guinea pig red blood cells. Has insecticidal activity against S.frugiperda ovarian cells by opening non-selective ion channels. Enhances the insecticidal activity of spider venom neurotoxic peptides. The polypeptide is M-oxotoxin-Ot2d (Oxyopes takobius (Lynx spider)).